Consider the following 474-residue polypeptide: Mitogen-activated protein kinase pmk-3 (474 aa).

Residues 1–13 (MASVPSSSSLPVS) are compositionally biased toward low complexity. A disordered region spans residues 1 to 90 (MASVPSSSSL…EEEEDILSKP (90 aa)). Residues 30 to 48 (KRSNNQSQPPESYEPNTWL) show a composition bias toward polar residues. The span at 52–69 (REQEQQKKLAAENIKKQS) shows a compositional bias: basic and acidic residues. The Protein kinase domain occupies 114-419 (YDVEPNSIEY…VEEAIQHPYL (306 aa)). ATP contacts are provided by residues 124–132 (LGGGSFGNV) and K150. Catalysis depends on D252, which acts as the Proton acceptor. At T285 the chain carries Phosphothreonine. The TXY motif lies at 285–287 (TQY). The residue at position 287 (Y287) is a Phosphotyrosine.

The protein belongs to the protein kinase superfamily. CMGC Ser/Thr protein kinase family. MAP kinase subfamily. As to quaternary structure, interacts with mak-2. May interact with vhp-1. May interact with uev-3. The cofactor is Mg(2+). Dually phosphorylated on Thr-285 and Tyr-287, which activates the enzyme. Expressed throughout the intestine.

It is found in the nucleus. The protein resides in the cytoplasm. The protein localises to the cell projection. It localises to the axon. Its subcellular location is the dendrite. It is found in the cilium. It catalyses the reaction L-seryl-[protein] + ATP = O-phospho-L-seryl-[protein] + ADP + H(+). The enzyme catalyses L-threonyl-[protein] + ATP = O-phospho-L-threonyl-[protein] + ADP + H(+). Activated by phosphorylation on threonine and tyrosine. Its function is as follows. Responds to activation by environmental stress and pro-inflammatory cytokines by phosphorylating downstream targets. Involved in axon regeneration after injury, probably downstream of dlk-1 and mkk-4 and upstream of mak-2. May phosphorylate mak-2. Plays a role in cilium length regulation, possibly by reducing rab-5 mediated endocytosis. Plays a role in the formation of muscle connections, also called muscle arm extensions, between the body wall and the motor axons in the dorsal and ventral cord. This chain is Mitogen-activated protein kinase pmk-3 (pmk-3), found in Caenorhabditis elegans.